The sequence spans 743 residues: Conserved oligomeric Golgi complex subunit 8 (743 aa).

Disordered regions lie at residues 549–672 and 704–743; these read EDGP…TEPE and TQDD…KKDD. Basic and acidic residues-rich tracts occupy residues 563–581, 594–621, 633–647, and 654–664; these read ESVK…HGTD, PVKE…HETP, SEAK…HLEL, and QEIREQEHKEV. Residues 704–726 show a composition bias toward acidic residues; sequence TQDDPIEEEEGWGWGDDDGEEQE. Over residues 727–743 the composition is skewed to basic and acidic residues; the sequence is ISSKEVESPKEKCKKDD.

This sequence belongs to the COG8 family. In terms of assembly, component of the conserved oligomeric Golgi complex which is composed of eight different subunits and is required for normal Golgi morphology and localization.

It is found in the golgi apparatus membrane. In terms of biological role, required for normal Golgi function. This Caenorhabditis elegans protein is Conserved oligomeric Golgi complex subunit 8 (cogc-8).